The sequence spans 314 residues: Quinolinate synthase (314 aa).

The iminosuccinate site is built by His27 and Ser44. Cys89 contacts [4Fe-4S] cluster. Residues 115–117 (YIN) and Ser132 each bind iminosuccinate. Cys175 lines the [4Fe-4S] cluster pocket. Iminosuccinate contacts are provided by residues 201-203 (HPE) and Thr218. Residue Cys271 coordinates [4Fe-4S] cluster.

The protein belongs to the quinolinate synthase family. Type 2 subfamily. [4Fe-4S] cluster is required as a cofactor.

The protein localises to the cytoplasm. It carries out the reaction iminosuccinate + dihydroxyacetone phosphate = quinolinate + phosphate + 2 H2O + H(+). The protein operates within cofactor biosynthesis; NAD(+) biosynthesis; quinolinate from iminoaspartate: step 1/1. Catalyzes the condensation of iminoaspartate with dihydroxyacetone phosphate to form quinolinate. The protein is Quinolinate synthase of Ehrlichia chaffeensis (strain ATCC CRL-10679 / Arkansas).